The primary structure comprises 181 residues: Adenine phosphoribosyltransferase 1 (181 aa).

It belongs to the purine/pyrimidine phosphoribosyltransferase family. Homodimer.

The protein localises to the cytoplasm. The enzyme catalyses AMP + diphosphate = 5-phospho-alpha-D-ribose 1-diphosphate + adenine. Its pathway is purine metabolism; AMP biosynthesis via salvage pathway; AMP from adenine: step 1/1. In terms of biological role, catalyzes a salvage reaction resulting in the formation of AMP, that is energically less costly than de novo synthesis. This is Adenine phosphoribosyltransferase 1 (APT1) from Triticum aestivum (Wheat).